A 275-amino-acid chain; its full sequence is Large ribosomal subunit protein uL2 (275 aa).

A compositionally biased stretch (polar residues) spans Asp35 to Ile49. 2 disordered regions span residues Asp35–Lys59 and Ala224–Arg275. The segment covering Thr50–Lys59 has biased composition (basic residues).

The protein belongs to the universal ribosomal protein uL2 family. In terms of assembly, part of the 50S ribosomal subunit. Forms a bridge to the 30S subunit in the 70S ribosome.

One of the primary rRNA binding proteins. Required for association of the 30S and 50S subunits to form the 70S ribosome, for tRNA binding and peptide bond formation. It has been suggested to have peptidyltransferase activity; this is somewhat controversial. Makes several contacts with the 16S rRNA in the 70S ribosome. This chain is Large ribosomal subunit protein uL2, found in Burkholderia orbicola (strain AU 1054).